Reading from the N-terminus, the 246-residue chain is Large ribosomal subunit protein uL30-like 1 (246 aa).

The residue at position 54 (Ser54) is a Phosphoserine.

The protein belongs to the universal ribosomal protein uL30 family.

The protein is Large ribosomal subunit protein uL30-like 1 (RPL7L1) of Pongo abelii (Sumatran orangutan).